We begin with the raw amino-acid sequence, 540 residues long: Glucose-6-phosphate isomerase (540 aa).

Catalysis depends on Glu-350, which acts as the Proton donor. Active-site residues include His-381 and Lys-503.

Belongs to the GPI family.

The protein localises to the cytoplasm. The enzyme catalyses alpha-D-glucose 6-phosphate = beta-D-fructose 6-phosphate. It functions in the pathway carbohydrate biosynthesis; gluconeogenesis. The protein operates within carbohydrate degradation; glycolysis; D-glyceraldehyde 3-phosphate and glycerone phosphate from D-glucose: step 2/4. Functionally, catalyzes the reversible isomerization of glucose-6-phosphate to fructose-6-phosphate. The sequence is that of Glucose-6-phosphate isomerase from Burkholderia lata (strain ATCC 17760 / DSM 23089 / LMG 22485 / NCIMB 9086 / R18194 / 383).